We begin with the raw amino-acid sequence, 338 residues long: Ornithine carbamoyltransferase (338 aa).

Carbamoyl phosphate-binding positions include 56-59 (STRT), Gln-83, Arg-107, and 134-137 (HPTQ). L-ornithine-binding positions include Asn-168, Asp-232, and 236-237 (SM). Carbamoyl phosphate is bound by residues 274–275 (CL) and Arg-320.

The protein belongs to the aspartate/ornithine carbamoyltransferase superfamily. OTCase family.

Its subcellular location is the cytoplasm. The enzyme catalyses carbamoyl phosphate + L-ornithine = L-citrulline + phosphate + H(+). It functions in the pathway amino-acid biosynthesis; L-arginine biosynthesis; L-arginine from L-ornithine and carbamoyl phosphate: step 1/3. Its function is as follows. Reversibly catalyzes the transfer of the carbamoyl group from carbamoyl phosphate (CP) to the N(epsilon) atom of ornithine (ORN) to produce L-citrulline. This Photorhabdus laumondii subsp. laumondii (strain DSM 15139 / CIP 105565 / TT01) (Photorhabdus luminescens subsp. laumondii) protein is Ornithine carbamoyltransferase.